The primary structure comprises 259 residues: Tumor necrosis factor receptor superfamily member 10C (259 aa).

The signal sequence occupies residues 1 to 25 (MARIPKTLKFVVVIVAVLLPVLAYS). 3 TNFR-Cys repeats span residues 29–66 (ARQE…TGAC), 69–109 (CTEG…DTVC), and 110–149 (QCKE…DIQC). Residues 30-45 (RQEEVPQQTVAPQQQR) are compositionally biased toward polar residues. Residues 30–56 (RQEEVPQQTVAPQQQRHSFKGEECPAG) are disordered. 7 disulfides stabilise this stretch: Cys53-Cys66, Cys69-Cys85, Cys88-Cys101, Cys91-Cys109, Cys111-Cys125, Cys128-Cys141, and Cys131-Cys149. N-linked (GlcNAc...) (high mannose) asparagine glycosylation occurs at Asn77. N-linked (GlcNAc...) (high mannose) asparagine glycosylation is found at Asn140 and Asn156. A disordered region spans residues 160–224 (ETPAAEETMN…TSPGTPAPAA (65 aa)). TAPE repeat units follow at residues 162–176 (PAAE…GTPA), 177–191 (PAAE…GTPA), 192–206 (PAAE…GTPA), 207–221 (PAAE…GTPA), and 222–236 (PAAE…GTPA). Low complexity predominate over residues 185 to 217 (TSPGTPAPAAEETMTTSPGTPAPAAEETMTTSP). Ala236 carries the GPI-anchor amidated alanine lipid modification. The propeptide at 237–259 (SSHYLSCTIVGIIVLIVLLIVFV) is removed in mature form.

N-glycosylated and O-glycosylated. Higher expression in normal tissues than in tumor cell lines. Highly expressed in peripheral blood lymphocytes, spleen, skeletal muscle, placenta, lung and heart.

It localises to the cell membrane. Functionally, receptor for the cytotoxic ligand TRAIL. Lacks a cytoplasmic death domain and hence is not capable of inducing apoptosis. May protect cells against TRAIL mediated apoptosis by competing with TRAIL-R1 and R2 for binding to the ligand. In Homo sapiens (Human), this protein is Tumor necrosis factor receptor superfamily member 10C (TNFRSF10C).